We begin with the raw amino-acid sequence, 322 residues long: Beta-ketoacyl-[acyl-carrier-protein] synthase III (322 aa).

Residues Cys-113 and His-247 contribute to the active site. An ACP-binding region spans residues 248-252 (QANIR). Asn-278 is an active-site residue.

Belongs to the thiolase-like superfamily. FabH family. In terms of assembly, homodimer.

The protein localises to the cytoplasm. The enzyme catalyses malonyl-[ACP] + acetyl-CoA + H(+) = 3-oxobutanoyl-[ACP] + CO2 + CoA. Its pathway is lipid metabolism; fatty acid biosynthesis. In terms of biological role, catalyzes the condensation reaction of fatty acid synthesis by the addition to an acyl acceptor of two carbons from malonyl-ACP. Catalyzes the first condensation reaction which initiates fatty acid synthesis and may therefore play a role in governing the total rate of fatty acid production. Possesses both acetoacetyl-ACP synthase and acetyl transacylase activities. Its substrate specificity determines the biosynthesis of branched-chain and/or straight-chain of fatty acids. This chain is Beta-ketoacyl-[acyl-carrier-protein] synthase III, found in Tropheryma whipplei (strain TW08/27) (Whipple's bacillus).